We begin with the raw amino-acid sequence, 333 residues long: MNKIHAVITGIGGYVPEYKLTNEEISTMVDTSDEWILKRIGIKERRILKPEEGKGITYLALKAIEDLKSRHDFDPLEIDAVLFATATPDYPFPNSASLIAHKVGITNAFGFDMEAACSGFIYALEVAQGFIVSGKHKKVMIIAGDVLSVFIDYSDRNTSPIFGDGCGCALVEATMEDIGLVDSIMRCDGSIPESLHVYGGGSVNPTTYETINNKLHYVWQDGKVVFRHAVSNMADTCQKLISKNNLSKDEIDWVVPHQANLRIIDAVTNHLKISRERVMINIEKYGNTGAASIPLCLCEWESKLHKGDKMIFTAFGAGFTWGATYLKWGYDSH.

Active-site residues include cysteine 117 and histidine 257. The tract at residues 258–262 (QANLR) is ACP-binding. Residue asparagine 287 is part of the active site.

The protein belongs to the thiolase-like superfamily. FabH family. Homodimer.

It localises to the cytoplasm. It catalyses the reaction malonyl-[ACP] + acetyl-CoA + H(+) = 3-oxobutanoyl-[ACP] + CO2 + CoA. Its pathway is lipid metabolism; fatty acid biosynthesis. In terms of biological role, catalyzes the condensation reaction of fatty acid synthesis by the addition to an acyl acceptor of two carbons from malonyl-ACP. Catalyzes the first condensation reaction which initiates fatty acid synthesis and may therefore play a role in governing the total rate of fatty acid production. Possesses both acetoacetyl-ACP synthase and acetyl transacylase activities. Its substrate specificity determines the biosynthesis of branched-chain and/or straight-chain of fatty acids. The chain is Beta-ketoacyl-[acyl-carrier-protein] synthase III from Azobacteroides pseudotrichonymphae genomovar. CFP2.